Reading from the N-terminus, the 808-residue chain is MAKRHKHFESRGGFRKKRGGGRGSQRGRGSKRGRGGRFRGFEETERSASEPGAWLNSSVPLGDGDLSNPDMMVDNYRPRKHISQDTITDHYFGRKSSLKLNSMRMAGLRHNDWRDPNNGNSASFRKRPIEFIKANCTYDPSRDLILQLANRSKNQESKEPEEDANKCSEYAEHSEKDMEIDTAATENDANISYDESDTDQEIGNFNHSIENSKHNNNISECDITAVTDQELFFVDEEGMDISQKPTKVVHITEHEKKMGSNVEFHNVLTVGKVEISLNQDENDEVYVDRKPTAKYHPFHNYISNVIERMQEEENIDSDDFEDEDDIYLDNSGNDMPETELDQDEIIDLQRHDDKDHAVQTCAIPTNTLSNDLDTLHITESNDDRITINNHNMDSTVETDKEKDPEFGFLEEDYAVNTSEVIVDNIRLGLNDNSYFLKCYRFFGDYSFHWIDQEAFVSFLTEDLELPMNRVGAYLAYVKNSLVPDETPPSPTYSDIPFSDTSNESDEDNALPNVDAVSSCSNDDEDEELGDDVDDLVSYSLKYANSRNIDYETRALEFTGKGKKKKLLVNEQLDLDNETMETLQAKLSKRMENKAKKRRLKEDFIDKENMNSDDLFLKYPYGFHVQNIRDEFELFLTRNKDRMSFPPLDPHGNKVITKFATCYNIKSSKVGKGNHTHIMVEKVKKTKWSRPNYNMVLQLTRQRPVFMRIDVRRPKEDAIKENSGRRGPTAKFHVKEGEVVGENAPEIGQDNIGRRMLEKLGWSSGEGLGAHGNKGISIPVMARVKKSKSGLRHSKEDEDTGRSSSFRKK.

Composition is skewed to basic residues over residues 1 to 20 (MAKRHKHFESRGGFRKKRGG) and 28 to 37 (RGSKRGRGGR). Disordered stretches follow at residues 1 to 67 (MAKR…GDLS), 151 to 180 (RSKNQESKEPEEDANKCSEYAEHSEKDMEI), and 485 to 529 (ETPP…EELG). Composition is skewed to basic and acidic residues over residues 39 to 48 (RGFEETERSA) and 153 to 179 (KNQESKEPEEDANKCSEYAEHSEKDME). The R3H domain occupies 621–683 (GFHVQNIRDE…HTHIMVEKVK (63 aa)). One can recognise a G-patch domain in the interval 748–795 (QDNIGRRMLEKLGWSSGEGLGAHGNKGISIPVMARVKKSKSGLRHSKE). The segment at 764–808 (GEGLGAHGNKGISIPVMARVKKSKSGLRHSKEDEDTGRSSSFRKK) is disordered. Over residues 782–791 (RVKKSKSGLR) the composition is skewed to basic residues.

This sequence belongs to the SQS1 family.

The protein resides in the cytoplasm. The protein localises to the nucleus. Its function is as follows. May be involved in splicing. This chain is Protein SQS1 (SQS1), found in Candida glabrata (strain ATCC 2001 / BCRC 20586 / JCM 3761 / NBRC 0622 / NRRL Y-65 / CBS 138) (Yeast).